We begin with the raw amino-acid sequence, 208 residues long: Cysteine-rich protein 2 (208 aa).

The 53-residue stretch at 5-57 (CPKCDKTVYFAEKVSSLGKDWHKFCLKCERCNKTLTPGGHAEHDGKPFCHKPC) folds into the LIM zinc-binding 1 domain. N6-acetyllysine is present on lysine 23. Serine 104 is subject to Phosphoserine. The region spanning 126–178 (CPRCNKRVYFAEKVTSLGKDWHRPCLRCERCSKTLTPGGHAEHDGQPYCHKPC) is the LIM zinc-binding 2 domain. N6-acetyllysine occurs at positions 138 and 144.

In terms of assembly, interacts with TGFB1I1.

The sequence is that of Cysteine-rich protein 2 (Crip2) from Mus musculus (Mouse).